The chain runs to 196 residues: Carnitine operon protein CaiE (196 aa).

The segment at 173–196 (TQPLRQMEENRPRLQGTTDVTPKR) is disordered. A compositionally biased stretch (polar residues) spans 187-196 (QGTTDVTPKR).

It belongs to the transferase hexapeptide repeat family.

The protein operates within amine and polyamine metabolism; carnitine metabolism. Its function is as follows. Overproduction of CaiE stimulates the activity of CaiB and CaiD. The polypeptide is Carnitine operon protein CaiE (Escherichia coli O139:H28 (strain E24377A / ETEC)).